Here is a 564-residue protein sequence, read N- to C-terminus: Urocanate hydratase (564 aa).

Residues Gly-58 to Gly-59, Gln-136, Gly-182 to Gly-184, Glu-202, Arg-207, Asn-245 to Ala-246, Gln-266 to His-270, Tyr-276 to Leu-277, and Tyr-325 contribute to the NAD(+) site. Cys-413 is an active-site residue. Gly-495 contacts NAD(+).

This sequence belongs to the urocanase family. The cofactor is NAD(+).

It is found in the cytoplasm. It catalyses the reaction 4-imidazolone-5-propanoate = trans-urocanate + H2O. Its pathway is amino-acid degradation; L-histidine degradation into L-glutamate; N-formimidoyl-L-glutamate from L-histidine: step 2/3. Catalyzes the conversion of urocanate to 4-imidazolone-5-propionate. The protein is Urocanate hydratase of Vibrio atlanticus (strain LGP32) (Vibrio splendidus (strain Mel32)).